We begin with the raw amino-acid sequence, 445 residues long: Plasmid recombination enzyme (445 aa).

Positions 45 and 113 each coordinate DNA.

The protein belongs to the plasmid mobilization pre family.

The protein is Plasmid recombination enzyme of Bacillus thuringiensis.